We begin with the raw amino-acid sequence, 233 residues long: Large ribosomal subunit protein uL1 (233 aa).

This sequence belongs to the universal ribosomal protein uL1 family. As to quaternary structure, part of the 50S ribosomal subunit.

Functionally, binds directly to 23S rRNA. The L1 stalk is quite mobile in the ribosome, and is involved in E site tRNA release. Protein L1 is also a translational repressor protein, it controls the translation of the L11 operon by binding to its mRNA. This is Large ribosomal subunit protein uL1 from Marinomonas sp. (strain MWYL1).